Consider the following 313-residue polypeptide: Cytochrome c biogenesis protein CcsA (313 aa).

8 helical membrane passes run 9–29, 44–64, 71–91, 101–121, 143–163, 217–237, 244–264, and 278–298; these read ILTH…LITL, GIIV…ISSG, LYES…IPYF, IIGP…LTEI, MILG…LLVI, VISL…VWAN, WNWD…AIYL, and AIVA…VNLL.

Belongs to the CcmF/CycK/Ccl1/NrfE/CcsA family. As to quaternary structure, may interact with Ccs1.

It is found in the plastid. The protein localises to the chloroplast thylakoid membrane. Functionally, required during biogenesis of c-type cytochromes (cytochrome c6 and cytochrome f) at the step of heme attachment. The protein is Cytochrome c biogenesis protein CcsA of Nicotiana tomentosiformis (Tobacco).